The primary structure comprises 240 residues: Extracellular superoxide dismutase [Cu-Zn] (240 aa).

The N-terminal stretch at 1–18 (MLALLCSCLLLAAGASDA) is a signal peptide. 2 disulfides stabilise this stretch: cysteine 63/cysteine 208 and cysteine 125/cysteine 207. A glycan (N-linked (GlcNAc...) asparagine) is linked at asparagine 107. Positions 114, 116, and 131 each coordinate Cu cation. Positions 131, 139, 142, and 145 each coordinate Zn(2+). Histidine 181 serves as a coordination point for Cu cation. N-linked (Glc) (glycation) lysine; in vitro glycans are attached at residues lysine 229 and lysine 230.

The protein belongs to the Cu-Zn superoxide dismutase family. In terms of assembly, homotetramer. Directly interacts with ATP7A; this interaction is copper-dependent and is required for SOD3 activity. The cofactor is Cu cation. Requires Zn(2+) as cofactor. As to expression, expressed in blood vessels, heart, lung, kidney and placenta. Major SOD isoenzyme in extracellular fluids such as plasma, lymph and synovial fluid.

Its subcellular location is the secreted. It is found in the extracellular space. The protein resides in the golgi apparatus. The protein localises to the trans-Golgi network. It carries out the reaction 2 superoxide + 2 H(+) = H2O2 + O2. Protect the extracellular space from toxic effect of reactive oxygen intermediates by converting superoxide radicals into hydrogen peroxide and oxygen. The chain is Extracellular superoxide dismutase [Cu-Zn] (SOD3) from Homo sapiens (Human).